A 75-amino-acid chain; its full sequence is UPF0352 protein ESA_01049 (75 aa).

This sequence belongs to the UPF0352 family.

This is UPF0352 protein ESA_01049 from Cronobacter sakazakii (strain ATCC BAA-894) (Enterobacter sakazakii).